The following is a 781-amino-acid chain: Arf-GAP with coiled-coil, ANK repeat and PH domain-containing protein 2 (781 aa).

Residues 1–226 (MKVTVDFEEC…MKDLGAQLDQ (226 aa)) form the BAR domain. Residues 266–361 (GIVMEGYLFK…WIKAVQTSIA (96 aa)) form the PH domain. Positions 365-378 (REKGDESEKQEKKS) are enriched in basic and acidic residues. The disordered stretch occupies residues 365–390 (REKGDESEKQEKKSSPSTGSLESGSE). A compositionally biased stretch (low complexity) spans 379-388 (SPSTGSLESG). The 123-residue stretch at 399–521 (ESALQRVQCI…KFVEKQPAAA (123 aa)) folds into the Arf-GAP domain. Residues 414–437 (CCDCGLADPRWASINLGITLCIEC) form a C4-type zinc finger. Residues 520–576 (AAVSPLESRTKVLPQSQEEKRHSAPEKSFLAIEQGAASPRVRSSDSGIQQSVDDSRE) are disordered. 3 ANK repeats span residues 642-671 (NKAT…NVNI), 675-704 (KGRG…NQHA), and 708-737 (DGKD…NEEM).

Its subcellular location is the endosome membrane. The protein localises to the cell membrane. With respect to regulation, GAP activity stimulated by phosphatidylinositol 4,5-bisphosphate (PIP2) and phosphatidic acid. In terms of biological role, GTPase-activating protein (GAP) for ADP ribosylation factor 6 (ARF6). This Gallus gallus (Chicken) protein is Arf-GAP with coiled-coil, ANK repeat and PH domain-containing protein 2 (ACAP2).